Here is a 245-residue protein sequence, read N- to C-terminus: MKNNTKIIETKCSMEQINVSPKYYDIISFGYFPNYFNINNSTNSIENQSNNIKEYKISILEDFQENDNQTNKLCTTITNNIKIIKKISKSKKLNSKSHIFKKRNFKSNCTSSNQNSNNVIATLILPKIDDNNNNNNNDQIENNSINCINNNNINNNINENNKFTWVYYHYDCNGKRKSIYDDNEMSELSTTPFPKNHICSKCSSSQRSVFKLNKFGKLDCSFCLNNNNNTTTTTTTTPQPNSDFN.

This is an uncharacterized protein from Dictyostelium discoideum (Social amoeba).